Reading from the N-terminus, the 65-residue chain is Crotamine CRO1 (65 aa).

An N-terminal signal peptide occupies residues 1–22 (MKILYLLFAFLFLAFLSEPGNA). Cystine bridges form between Cys-26/Cys-58, Cys-33/Cys-52, and Cys-40/Cys-59.

It belongs to the crotamine-myotoxin family. Monomer. As to expression, expressed by the venom gland.

The protein localises to the secreted. Its function is as follows. Cationic peptide that possesses multiple functions. It acts as a cell-penetrating peptide (CPP), and as a potent voltage-gated potassium channel (Kv) inhibitor. It exhibits antimicrobial activities, hind limb paralysis, and severe muscle necrosis by a non-enzymatic mechanism. The chain is Crotamine CRO1 (CRO1) from Crotalus durissus terrificus (South American rattlesnake).